A 466-amino-acid polypeptide reads, in one-letter code: MGQTLYEKLYNSHIIYEDKNTLPIIYIDLHLLHEVTSPQAFESLKNKKRIVHAPIKTFATMDHNVSTKTNKISASGKAAQIQMQQLINNCKDFNIKLYDLNHINQGIVHVMGPEQGLTLPGMTIVCGDSHTSTHGAFGTLAFGIGTSEVEHVLATQTLKQARSKTMKIGINGILKPYITAKDVILYIIKKVGTAFGTGYVVEFSGETIENLTMEGRMTICNMVIEMGAKSGIIAPDATTYKYLKNLPYAPKKEKWKNALEYWKNLKTDNDAKFDKIVKFDVSQIEPQITWGTNPSQTINITESNPDPKKINNIIDKQATEKALKYMNLKPNQKMINLVVDKVFIGSCTNSRIEDLRIASKIIKNKKVAKTTKAIVVPGSKLVKIQAEKEGLDKIFINAGFEWRLPGCSMCLAMNDDKLNRGERCASTSNRNFEDRQGRGGRTHLVSPITAAAAAIFGYFVDIKNIL.

[4Fe-4S] cluster-binding residues include C347, C407, and C410.

The protein belongs to the aconitase/IPM isomerase family. LeuC type 1 subfamily. As to quaternary structure, heterodimer of LeuC and LeuD. [4Fe-4S] cluster is required as a cofactor.

The enzyme catalyses (2R,3S)-3-isopropylmalate = (2S)-2-isopropylmalate. It functions in the pathway amino-acid biosynthesis; L-leucine biosynthesis; L-leucine from 3-methyl-2-oxobutanoate: step 2/4. Catalyzes the isomerization between 2-isopropylmalate and 3-isopropylmalate, via the formation of 2-isopropylmaleate. The polypeptide is 3-isopropylmalate dehydratase large subunit (Buchnera aphidicola subsp. Thelaxes suberi).